A 256-amino-acid chain; its full sequence is Thiazole synthase (256 aa).

Lys95 serves as the catalytic Schiff-base intermediate with DXP. Residues Gly156, 182-183, and 204-205 contribute to the 1-deoxy-D-xylulose 5-phosphate site; these read AG and NT.

It belongs to the ThiG family. In terms of assembly, homotetramer. Forms heterodimers with either ThiH or ThiS.

It localises to the cytoplasm. It catalyses the reaction [ThiS sulfur-carrier protein]-C-terminal-Gly-aminoethanethioate + 2-iminoacetate + 1-deoxy-D-xylulose 5-phosphate = [ThiS sulfur-carrier protein]-C-terminal Gly-Gly + 2-[(2R,5Z)-2-carboxy-4-methylthiazol-5(2H)-ylidene]ethyl phosphate + 2 H2O + H(+). Its pathway is cofactor biosynthesis; thiamine diphosphate biosynthesis. Its function is as follows. Catalyzes the rearrangement of 1-deoxy-D-xylulose 5-phosphate (DXP) to produce the thiazole phosphate moiety of thiamine. Sulfur is provided by the thiocarboxylate moiety of the carrier protein ThiS. In vitro, sulfur can be provided by H(2)S. The chain is Thiazole synthase from Shigella boydii serotype 18 (strain CDC 3083-94 / BS512).